A 70-amino-acid polypeptide reads, in one-letter code: Small ribosomal subunit protein bS21B (70 aa).

The protein belongs to the bacterial ribosomal protein bS21 family.

In Rhizobium meliloti (strain 1021) (Ensifer meliloti), this protein is Small ribosomal subunit protein bS21B (rpsU2).